A 287-amino-acid chain; its full sequence is Ribosomal RNA small subunit methyltransferase A (287 aa).

Positions 28, 30, 55, 77, 103, and 123 each coordinate S-adenosyl-L-methionine.

The protein belongs to the class I-like SAM-binding methyltransferase superfamily. rRNA adenine N(6)-methyltransferase family. RsmA subfamily.

It localises to the cytoplasm. It carries out the reaction adenosine(1518)/adenosine(1519) in 16S rRNA + 4 S-adenosyl-L-methionine = N(6)-dimethyladenosine(1518)/N(6)-dimethyladenosine(1519) in 16S rRNA + 4 S-adenosyl-L-homocysteine + 4 H(+). Functionally, specifically dimethylates two adjacent adenosines (A1518 and A1519) in the loop of a conserved hairpin near the 3'-end of 16S rRNA in the 30S particle. May play a critical role in biogenesis of 30S subunits. In Nitrobacter winogradskyi (strain ATCC 25391 / DSM 10237 / CIP 104748 / NCIMB 11846 / Nb-255), this protein is Ribosomal RNA small subunit methyltransferase A.